The following is a 2197-amino-acid chain: MQKRQIKTQKRQIKFCIFELREIMREIKNSHYFLDSWTQFNSVGSFIHIFFHQERFLKLFDPRIFSILLSRNFQGSTSNRSFTIRGVILFVVAVLIYRINNRNMVERKNLYLTGFLPIPMNSTGPRNDRLEEAVGSSNINRLIVSLLYLPKGKKISESSFLNRKESTGVLSITKRNSSCKISNETVAEIEILFKEKDSKSLEFLFVYYMDDDSTHKDHDWKLADPILLERLAKDWISYLMSAFREKRPIEAGIFFKQHEHVSHLFSRNKGAISLQNCTQFHMWKFRQDLFLLFPSWGNNPPESYFWLGNVWLGKKDRFFSKVRNVWSNIQYDSTRSSFVQVTDSSQLKGSSDQSRDHLDSISNEDSEYRTLINQREIQQLEERSIPWDPSFLQTERKEIESDRFPKNLSGYSSMSQLFTEREKPMINHLFPEEMEEFLGNATRSVRSFFSDRWSELHLGSNPTERSTREQKLLKKHLSFVRRSENKEMIHLFKIITYLQNTISIHSISLDPGCDMVPKDDPDLDSSNKISFFNKNPFFDFFHRFHERNRGGYALHHDFESEERLQEMADLFTLSITEPDLVYHKGFSFSIDSYGLDQKKFLNEVFNTRAESKKKSLLVLSPVLFRYEENEYFFRRIRQKRVWISCGNGLGDLKQKMVVFASNNIMEAVNQYRLIRNLIQIQYNRYIRSVLNRFFLMNRSDRNFEYGIQRDQKGKDTLSHRTLMKYMIKQDYAYIYKWSNGSKNCQEHLEHFLSEQKSCFQVHFQVQKSRFQVMFDQLRIYTRIRINQFLMNYSEVCKKFEKDVYKLLTFFLPKWSRSLRFFFLFSQSLRFLGKSLHFLAKLLFFLSNSLSFPFSCVSFGNTPIHRSEINIYELKGPNDKLCNQLLESIGFQIVHLKKLNPFLLADDGTSKFLINGGTISPFLFNKIPKRMIDSFHTRTNRRKSFDNKDSYFSMIFYDQDNWLNPGKPFHRSSLISSFYKANRLRFLNNPHHFCFYCNKRFPFSVEKARNNNSYFLYGQFLNILFLRKKRFSLCVGKKKHVFGGRTTISPIESQVSNIFIPNDFPQSGDERYNLDKSFHFLSRPDPFVRRAIYSIVDTSGNPLTEGQIVNFERTYCQPLSDMNLSDSEGKNLHECPNFNSNIGLIHIPCSEKDFPSEKRKKQSLCLKKCVGVQKGRMYTTFQRDSAFSILSKKWNLFQTYMPSFFTSTGYKYLNSIFLDTFSDLLSILSSSVSIFHDIMGISWRILQTKLWKMQFFLRSEISSKWLHNLLSKEMIHRNKKNKSSLISTHLRSPNVWEFLYSILFLVLVAGYLVLIHLFFVSQTFSELQTEFEKVKSLMIPSSMIEIELRKLLDKYPTSEPNSFWLKNLFLFPINRIAFSINTRHLSHTSKEIYSLIRKRKNVNGDWIDDKIESWVANSDSIHEEERKFLVQLSALTTEKRILLSLTHSDHLSKNDSGYQMIEQPGAIYLRYLVDIHQKHLMNYEFNISCLAERRIFLAHYQTITYSQTSSGANSFHFPSDGKPFSLRLALSPSRGILVIGSIGTGRSYLVKYLATNSYVPFITVFLNKLLDKKPKFIADIDIDDSDNIDASDDIDIDDSDDIDRDLDTELELLTWMNALTMDKEMMAEINRLSITLQFELARAMSPCIIWIPNIHDLDVNESNYLSLGLLVNHLSRDCERCSTRNILVIASTHIPQKVDPALIAPNKFNTCIKLRRLLIPQQRKYFFTLSYTRGFHLEKKMFHTNGFGSITMGPNARDLVALTNEVLSISITQKKSIIDTNTIRSALHRQTWDLRSQVRSVQDHGILFYQIGRAVAQNVLLSNCPIDPISIYLKKKLCNEGDSYLYKWYFELGTSMKKFTILLYLLSCSAGSVAQDLWSLPGPDEKNGITSYGLVENDSDLVHGLLEVEGALVGSSRTEKNCSQFDNDRVTLLLRPEPRNPLDMMQNGSCSILDQIFLYEKYESEFEEGALDPNLDPQQIEEDLFNHIVWAPRIWRPWGFLCIERPNELGFSYWSRSFRGKRIFYDKEDELQENDSEFLQSGTMQYKTRDRSSKEQGFFRISQFIWDPADPLFFLFKDRSPGSVFSRRELFADEEMSKGLLTAQTYQTDEPSTSRSKSTRWFIKNTQEKHFELLINRQRWLRTNSSLSNGSFRSNTLSESYQYLSNLFLSNGTLFDQMTKTLLRKRWLFPDEMKIGFM.

1539 to 1546 (GSIGTGRS) serves as a coordination point for ATP.

Belongs to the Ycf2 family.

The protein resides in the plastid. Its subcellular location is the chloroplast stroma. Probable ATPase of unknown function. Its presence in a non-photosynthetic plant (Epifagus virginiana) and experiments in tobacco indicate that it has an essential function which is probably not related to photosynthesis. The polypeptide is Protein Ycf2 (Ipomoea purpurea (Common morning glory)).